Here is a 213-residue protein sequence, read N- to C-terminus: MAITQFRLFKVCTCLATVFSFLKRLICRSGRGRKLSGDQITLPTTVDYSSVPKQTDVEEWTSWDEDAPTSVKIEGGNGNVATQQNSLEQLEPDYFKDMTPTIRKTQKIVIKKREPLNFGVPDGSTGFSSRLAATQDMPFIHQSSELGDLDTWQENSNAWEEEEDAAWQAEEVLRQQKIADREKRAAEQQRKKMEKEAQRLMKKEQNKIGVKLS.

Over 1–7 (MAITQFR) the chain is Extracellular. Residues 8–27 (LFKVCTCLATVFSFLKRLIC) traverse the membrane as a helical; Signal-anchor for type III membrane protein segment. The Cytoplasmic portion of the chain corresponds to 28–213 (RSGRGRKLSG…EQNKIGVKLS (186 aa)). Ser-36 is modified (phosphoserine). Thr-41 bears the Phosphothreonine mark. Tyr-94 is subject to Phosphotyrosine. Positions 163–211 (EDAAWQAEEVLRQQKIADREKRAAEQQRKKMEKEAQRLMKKEQNKIGVK) form a coiled coil. Residues 179-206 (ADREKRAAEQQRKKMEKEAQRLMKKEQN) are compositionally biased toward basic and acidic residues. Residues 179-213 (ADREKRAAEQQRKKMEKEAQRLMKKEQNKIGVKLS) are disordered.

Homodimer. As to expression, widely expressed. Expressed in heart, brain, spleen, liver, kidney and testis.

It localises to the golgi apparatus membrane. May participate in suppression of cell proliferation and induces apoptotic cell death through activation of interleukin-1-beta converting enzyme (ICE)-like proteases. The protein is Receptor-binding cancer antigen expressed on SiSo cells (Ebag9) of Mus musculus (Mouse).